The following is a 1178-amino-acid chain: Double-stranded RNA-specific adenosine deaminase (1178 aa).

A disordered region spans residues 1 to 40 (MSQGFRGPTGVFPHQTQSYLDPSHEHSKWRYPQPQGPESY). Residues Arg30 and Arg42 each carry the asymmetric dimethylarginine modification. A Z-binding 1 domain is found at 135–201 (LSISQSPEQK…GKPPLWSLVP (67 aa)). The segment at 135 to 204 (LSISQSPEQK…PLWSLVPLSQ (70 aa)) is interaction with Z-DNA. The segment at 221–244 (EFPRGEPGLDSEDGDPASDLEGPS) is disordered. Residues 229–238 (LDSEDGDPAS) are compositionally biased toward acidic residues. 2 positions are modified to phosphoserine: Ser231 and Ser238. Residues 246–310 (PLDMAEIKEK…ATPPIWYLTD (65 aa)) enclose the Z-binding 2 domain. The disordered stretch occupies residues 316 to 383 (LQMKRSTHSA…SRHEARPGPM (68 aa)). Low complexity predominate over residues 323–337 (HSAPAPTPTAVPEAT). The span at 360-379 (KRVENGQEPAIKHESRHEAR) shows a compositional bias: basic and acidic residues. Lys371 is covalently cross-linked (Glycyl lysine isopeptide (Lys-Gly) (interchain with G-Cter in SUMO); alternate). Residue Lys371 forms a Glycyl lysine isopeptide (Lys-Gly) (interchain with G-Cter in SUMO1); alternate linkage. Residue Lys371 forms a Glycyl lysine isopeptide (Lys-Gly) (interchain with G-Cter in SUMO2); alternate linkage. Residue Ser434 is modified to Phosphoserine. The region spanning 456–524 (NPVSGLLEYA…AVKAMAILLR (69 aa)) is the DRBM 1 domain. A compositionally biased stretch (basic and acidic residues) spans 527–550 (KAKDSGQPEDLSHCPMEEDSEKPA). The segment at 527 to 564 (KAKDSGQPEDLSHCPMEEDSEKPAEAQAPSSSATSLFS) is disordered. Over residues 554–564 (APSSSATSLFS) the composition is skewed to polar residues. 3 positions are modified to phosphoserine: Ser567, Ser582, and Ser589. The 69-residue stretch at 567-635 (SPVTTLLECM…AEEAMKALQE (69 aa)) folds into the DRBM 2 domain. The disordered stretch occupies residues 631–657 (KALQEEAASSADDQSGGANTDSLDESM). Residues 635 to 648 (EEAASSADDQSGGA) show a composition bias toward low complexity. The N-terminal extension of DRBM 3 and constituent of a bi-partite nuclear localization signal stretch occupies residues 665-674 (IGELVRYLNT). The region spanning 675–743 (NPVGGLLEYA…ADAALRVLIG (69 aa)) is the DRBM 3 domain. The interval 744-750 (ESEKAEQ) is C-terminal extension of DRBM 3 and constituent of a bi-partite nuclear localization signal. Thr757 is modified (phosphothreonine). Phosphoserine is present on residues Ser763, Ser772, and Ser774. Lys824 participates in a covalent cross-link: Glycyl lysine isopeptide (Lys-Gly) (interchain with G-Cter in SUMO2). One can recognise an A to I editase domain in the interval 835–1170 (SLGTGNRCVK…ISKPQEEKNF (336 aa)). His859 is a Zn(2+) binding site. Glu861 (proton donor) is an active-site residue. Residues Cys915 and Cys985 each contribute to the Zn(2+) site.

Homodimer. Homodimerization is essential for its catalytic activity. Isoform 5 can form heterodimers with ADARB1/ADAR2. Isoform 1 and isoform 5 (via DRBM 3 domain) interact with TNPO1. Isoform 5 (via DRBM domains) interacts with XPO5. Isoform 1 and isoform 5 can interact with UPF1. Isoform 1 interacts with ILF2/NF45 and ILF3/NF90. Binding to ILF3/NF90 up-regulates ILF3-mediated gene expression. Isoform 1 and isoform 5 interact with EIF2AK2/PKR. Post-translationally, sumoylation reduces RNA-editing activity. In terms of tissue distribution, highest levels in brain and spleen. Lowest levels in liver.

It localises to the cytoplasm. Its subcellular location is the nucleus. The protein localises to the nucleolus. It carries out the reaction adenosine in double-stranded RNA + H2O + H(+) = inosine in double-stranded RNA + NH4(+). Catalyzes the hydrolytic deamination of adenosine to inosine in double-stranded RNA (dsRNA) referred to as A-to-I RNA editing. This may affect gene expression and function in a number of ways that include mRNA translation by changing codons and hence the amino acid sequence of proteins since the translational machinery read the inosine as a guanosine; pre-mRNA splicing by altering splice site recognition sequences; RNA stability by changing sequences involved in nuclease recognition; genetic stability in the case of RNA virus genomes by changing sequences during viral RNA replication; and RNA structure-dependent activities such as microRNA production or targeting or protein-RNA interactions. Can edit both viral and cellular RNAs and can edit RNAs at multiple sites (hyper-editing) or at specific sites (site-specific editing). Its cellular RNA substrates include: bladder cancer-associated protein (BLCAP), neurotransmitter receptors for glutamate (GRIA2) and serotonin (HTR2C) and GABA receptor (GABRA3). Site-specific RNA editing of transcripts encoding these proteins results in amino acid substitutions which consequently alters their functional activities. Exhibits low-level editing at the GRIA2 Q/R site, but edits efficiently at the R/G site and HOTSPOT1. Does not affect polyomavirus replication but provides protection against virus-induced cytopathic effects. Essential for embryonic development and cell survival and plays a critical role in the maintenance of hematopoietic stem cells. The polypeptide is Double-stranded RNA-specific adenosine deaminase (Adar) (Mus musculus (Mouse)).